We begin with the raw amino-acid sequence, 183 residues long: ADP-ribosylation factor-like protein 1 (183 aa).

Residue glycine 2 is the site of N-myristoyl glycine attachment. Residues 25 to 32, 68 to 72, and 127 to 130 each bind GTP; these read GLDGAGKT, DLGGQ, and NKQD.

Belongs to the small GTPase superfamily. Arf family. Homodimer. Interacts with IMH1 (via GRIP domain); the interaction is dependent on GTP. Interacts with MON2.

It localises to the golgi apparatus. In terms of biological role, recruits golgins such as IMH1 to the Golgi. Can bind and hydrolyze GTP. May be involved in trafficking events within the endosomal system. In Saccharomyces cerevisiae (strain ATCC 204508 / S288c) (Baker's yeast), this protein is ADP-ribosylation factor-like protein 1 (ARL1).